The following is a 492-amino-acid chain: Adenosylhomocysteinase (492 aa).

Substrate-binding residues include T68, D153, and E215. 216-218 is an NAD(+) binding site; it reads TTT. Residues K245 and D249 each coordinate substrate. Residues N250, 279-284, E302, N337, 358-360, and N406 contribute to the NAD(+) site; these read GYGDVG and IGH.

The protein belongs to the adenosylhomocysteinase family. It depends on NAD(+) as a cofactor.

Its subcellular location is the cytoplasm. It carries out the reaction S-adenosyl-L-homocysteine + H2O = L-homocysteine + adenosine. It participates in amino-acid biosynthesis; L-homocysteine biosynthesis; L-homocysteine from S-adenosyl-L-homocysteine: step 1/1. Its function is as follows. May play a key role in the regulation of the intracellular concentration of adenosylhomocysteine. This chain is Adenosylhomocysteinase, found in Mycobacterium leprae (strain Br4923).